Consider the following 31-residue polypeptide: Cytochrome b6-f complex subunit 6 (31 aa).

A helical transmembrane segment spans residues 3–23 (ILISYFCFLLVFFLFTLILFI).

This sequence belongs to the PetL family. As to quaternary structure, the 4 large subunits of the cytochrome b6-f complex are cytochrome b6, subunit IV (17 kDa polypeptide, PetD), cytochrome f and the Rieske protein, while the 4 small subunits are PetG, PetL, PetM and PetN. The complex functions as a dimer.

It is found in the plastid. The protein localises to the chloroplast thylakoid membrane. In terms of biological role, component of the cytochrome b6-f complex, which mediates electron transfer between photosystem II (PSII) and photosystem I (PSI), cyclic electron flow around PSI, and state transitions. PetL is important for photoautotrophic growth as well as for electron transfer efficiency and stability of the cytochrome b6-f complex. The sequence is that of Cytochrome b6-f complex subunit 6 from Welwitschia mirabilis (Tree tumbo).